Reading from the N-terminus, the 713-residue chain is Polyribonucleotide nucleotidyltransferase (713 aa).

Mg(2+) is bound by residues D487 and D493. In terms of domain architecture, KH spans 554–613 (PRIEVMNIPVDKIREVIGSGGKVIREIVEKTGAKINIEDDGTVKIASASGKEIEAARKWI). In terms of domain architecture, S1 motif spans 623 to 691 (GQIYEGTVVK…ERGKVRLSMK (69 aa)).

Belongs to the polyribonucleotide nucleotidyltransferase family. Requires Mg(2+) as cofactor.

Its subcellular location is the cytoplasm. The catalysed reaction is RNA(n+1) + phosphate = RNA(n) + a ribonucleoside 5'-diphosphate. Involved in mRNA degradation. Catalyzes the phosphorolysis of single-stranded polyribonucleotides processively in the 3'- to 5'-direction. This chain is Polyribonucleotide nucleotidyltransferase, found in Agrobacterium fabrum (strain C58 / ATCC 33970) (Agrobacterium tumefaciens (strain C58)).